Reading from the N-terminus, the 287-residue chain is Protein HEXIM2 (287 aa).

Disordered regions lie at residues 1–212 and 266–287; these read MKDW…RSKE and RLRQENEMWNREGGRRGGQPGS. Position 31 is a phosphoserine (Ser-31). 2 positions are modified to phosphothreonine: Thr-34 and Thr-48. Phosphoserine is present on residues Ser-53, Ser-55, Ser-73, Ser-78, and Ser-83. Over residues 89-105 the composition is skewed to basic residues; it reads ARKKHRRRPSKRKRHWR. Residues 115–134 show a composition bias toward basic and acidic residues; it reads KQQRDERQSQRASRVREEMF. The interval 142–145 is interaction with P-TEFb; the sequence is PYNT. Composition is skewed to basic and acidic residues over residues 181-212 and 266-280; these read GQGRARGEFQQKDFSEAYERYHTESLQGRSKE and RLRQENEMWNREGGR. Residues 208–278 adopt a coiled-coil conformation; sequence GRSKEELVRD…QENEMWNREG (71 aa). The interaction with CCNT1, HEXIM1 and HEXIM2 stretch occupies residues 227-287; it reads QAEEEMRRLR…GGRRGGQPGS (61 aa).

This sequence belongs to the HEXIM family. In terms of assembly, homooligomer and heterooligomer with HEXIM1; probably dimeric. Core component of the 7SK RNP complex, at least composed of 7SK RNA, LARP7, MEPCE, HEXIM1 (or HEXIM2) and P-TEFb (composed of CDK9 and CCNT1/cyclin-T1). Interacts with CCNT2.

Its subcellular location is the nucleus. Its function is as follows. Transcriptional regulator which functions as a general RNA polymerase II transcription inhibitor. Core component of the 7SK RNP complex: in cooperation with 7SK snRNA sequesters P-TEFb in a large inactive 7SK snRNP complex preventing RNA polymerase II phosphorylation and subsequent transcriptional elongation. The chain is Protein HEXIM2 (HEXIM2) from Bos taurus (Bovine).